The sequence spans 428 residues: Histidine--tRNA ligase (428 aa).

It belongs to the class-II aminoacyl-tRNA synthetase family. Homodimer.

The protein resides in the cytoplasm. It carries out the reaction tRNA(His) + L-histidine + ATP = L-histidyl-tRNA(His) + AMP + diphosphate + H(+). The protein is Histidine--tRNA ligase of Bordetella bronchiseptica (strain ATCC BAA-588 / NCTC 13252 / RB50) (Alcaligenes bronchisepticus).